Reading from the N-terminus, the 437-residue chain is UBX domain-containing protein 6 (437 aa).

2 disordered regions span residues 1 to 45 and 89 to 109; these read MNSF…AQGG and ERRQ…QPDR. Basic residues predominate over residues 7 to 18; the sequence is FLNKKRVQNHFK. The 73-residue stretch at 179-251 folds into the PUB domain; that stretch reads ETAIETICKY…VFTKPSDVHL (73 aa). The UBX domain occupies 332 to 409; it reads YRYKYTLIRV…SLAPAALLHV (78 aa).

In terms of assembly, interacts with cdc-48.1 (via N-terminus) and cdc-48.2 (via N-terminus). In terms of tissue distribution, expressed in the pharynx and some head neurons.

In terms of biological role, probably acts as an adapter for ATPase cdc-48.1 and/or cdc-48.2, conferring substrate specificity. Involved in the lysosomal clearance of cellular material in diet restricted conditions. This Caenorhabditis elegans protein is UBX domain-containing protein 6.